We begin with the raw amino-acid sequence, 312 residues long: Cobalamin biosynthesis protein CobD (312 aa).

Transmembrane regions (helical) follow at residues 61-81 (IALLLAPFTLAAWALARLPLL), 83-103 (IIVPVALLYLAVGARSLAQHA), 152-172 (DAVFAALFWFLVLGAPGAVLY), and 292-312 (GMWLWAALSLAAAILIGAIHA).

This sequence belongs to the CobD/CbiB family.

It is found in the cell membrane. It functions in the pathway cofactor biosynthesis; adenosylcobalamin biosynthesis. Its function is as follows. Converts cobyric acid to cobinamide by the addition of aminopropanol on the F carboxylic group. In Chromobacterium violaceum (strain ATCC 12472 / DSM 30191 / JCM 1249 / CCUG 213 / NBRC 12614 / NCIMB 9131 / NCTC 9757 / MK), this protein is Cobalamin biosynthesis protein CobD.